We begin with the raw amino-acid sequence, 428 residues long: UPF0597 protein BF3772 (428 aa).

The protein belongs to the UPF0597 family.

In Bacteroides fragilis (strain YCH46), this protein is UPF0597 protein BF3772.